The primary structure comprises 261 residues: Cytochrome c oxidase subunit 3 (261 aa).

At 1–15 (MTHQLHAYHMVKPSP) the chain is on the mitochondrial matrix side. A helical membrane pass occupies residues 16 to 34 (WPLTGALSAFLLTSGLIMW). The Mitochondrial intermembrane portion of the chain corresponds to 35–40 (FHFYST). The helical transmembrane segment at 41 to 66 (ALLTLGLLTNVLTMYQWWRDIIREST) threads the bilayer. Over 67-72 (YQGHHT) the chain is Mitochondrial matrix. Residues 73–105 (TPVQKSLRYGMTLFIISEVFFFAGFFWAFYHSS) traverse the membrane as a helical segment. Topologically, residues 106 to 128 (LAPTPRLGCHWPPTGITPLNPLE) are mitochondrial intermembrane. The helical transmembrane segment at 129 to 152 (VPLLNTSVLLASGVTITWAHHSLM) threads the bilayer. Residues 153–155 (NGN) lie on the Mitochondrial matrix side of the membrane. Residues 156–183 (RKQTIQALLITILLGTYFTLVQISEYFE) traverse the membrane as a helical segment. Topologically, residues 184–190 (APFTISD) are mitochondrial intermembrane. The helical transmembrane segment at 191-223 (GIYGSTFFVATGFHGLHVIIGSTFLLICLIRQL) threads the bilayer. The Mitochondrial matrix portion of the chain corresponds to 224–232 (FYHFTPSHH). Residues 233–256 (FGFEAAAWYWHFVDVIWLFLYISI) form a helical membrane-spanning segment. Residues 257-261 (YWWGS) are Mitochondrial intermembrane-facing.

This sequence belongs to the cytochrome c oxidase subunit 3 family. As to quaternary structure, component of the cytochrome c oxidase (complex IV, CIV), a multisubunit enzyme composed of 14 subunits. The complex is composed of a catalytic core of 3 subunits MT-CO1, MT-CO2 and MT-CO3, encoded in the mitochondrial DNA, and 11 supernumerary subunits COX4I, COX5A, COX5B, COX6A, COX6B, COX6C, COX7A, COX7B, COX7C, COX8 and NDUFA4, which are encoded in the nuclear genome. The complex exists as a monomer or a dimer and forms supercomplexes (SCs) in the inner mitochondrial membrane with NADH-ubiquinone oxidoreductase (complex I, CI) and ubiquinol-cytochrome c oxidoreductase (cytochrome b-c1 complex, complex III, CIII), resulting in different assemblies (supercomplex SCI(1)III(2)IV(1) and megacomplex MCI(2)III(2)IV(2)).

Its subcellular location is the mitochondrion inner membrane. It catalyses the reaction 4 Fe(II)-[cytochrome c] + O2 + 8 H(+)(in) = 4 Fe(III)-[cytochrome c] + 2 H2O + 4 H(+)(out). In terms of biological role, component of the cytochrome c oxidase, the last enzyme in the mitochondrial electron transport chain which drives oxidative phosphorylation. The respiratory chain contains 3 multisubunit complexes succinate dehydrogenase (complex II, CII), ubiquinol-cytochrome c oxidoreductase (cytochrome b-c1 complex, complex III, CIII) and cytochrome c oxidase (complex IV, CIV), that cooperate to transfer electrons derived from NADH and succinate to molecular oxygen, creating an electrochemical gradient over the inner membrane that drives transmembrane transport and the ATP synthase. Cytochrome c oxidase is the component of the respiratory chain that catalyzes the reduction of oxygen to water. Electrons originating from reduced cytochrome c in the intermembrane space (IMS) are transferred via the dinuclear copper A center (CU(A)) of subunit 2 and heme A of subunit 1 to the active site in subunit 1, a binuclear center (BNC) formed by heme A3 and copper B (CU(B)). The BNC reduces molecular oxygen to 2 water molecules using 4 electrons from cytochrome c in the IMS and 4 protons from the mitochondrial matrix. The sequence is that of Cytochrome c oxidase subunit 3 (MT-CO3) from Papio hamadryas (Hamadryas baboon).